The primary structure comprises 528 residues: Protein spinster homolog 1 (528 aa).

The interval 1–38 (MAGSDTAPFLSQADDPDDGPAPGHPGLPGPMGNPKSGE) is disordered. At A2 the chain carries N-acetylalanine. A run of 12 helical transmembrane segments spans residues 60-80 (LIVV…FTVA), 98-118 (GLIQ…FGYL), 126-146 (YLMC…SFIP), 160-180 (VGVG…DLFV), 187-207 (MLSI…IAGS), 218-238 (WALR…FLVV), 278-298 (LGFT…PAFL), 323-343 (LIFG…GVEI), 357-377 (LVCA…LACA), 381-401 (IVAT…NWAI), 421-441 (FQIV…IGLI), and 465-485 (MLCA…AMFI). S518 is modified (phosphoserine).

The protein belongs to the major facilitator superfamily. Spinster (TC 2.A.1.49) family. Interacts with BCL2 and BCL2L1.

It localises to the lysosome membrane. The catalysed reaction is a 1-acyl-sn-glycero-3-phosphocholine(out) + H(+)(out) = a 1-acyl-sn-glycero-3-phosphocholine(in) + H(+)(in). The enzyme catalyses 1-hexadecanoyl-sn-glycero-3-phosphocholine(out) + H(+)(out) = 1-hexadecanoyl-sn-glycero-3-phosphocholine(in) + H(+)(in). It catalyses the reaction 1-(9Z-octadecenoyl)-sn-glycero-3-phosphocholine(out) + H(+)(out) = 1-(9Z-octadecenoyl)-sn-glycero-3-phosphocholine(in) + H(+)(in). It carries out the reaction 1-(5Z,8Z,11Z,14Z-eicosatetraenoyl)-sn-glycero-3-phosphocholine(out) + H(+)(out) = 1-(5Z,8Z,11Z,14Z-eicosatetraenoyl)-sn-glycero-3-phosphocholine(in) + H(+)(in). The catalysed reaction is 1-(4Z,7Z,10Z,13Z,16Z,19Z-docosahexaenoyl)-sn-glycero-3-phosphocholine(out) + H(+)(out) = 1-(4Z,7Z,10Z,13Z,16Z,19Z-docosahexaenoyl)-sn-glycero-3-phosphocholine(in) + H(+)(in). The enzyme catalyses a 1-acyl-sn-glycero-3-phosphoethanolamine(out) + H(+)(out) = a 1-acyl-sn-glycero-3-phosphoethanolamine(in) + H(+)(in). It catalyses the reaction 1-(9Z-octadecenoyl)-sn-glycero-3-phosphoethanolamine(out) + H(+)(out) = 1-(9Z-octadecenoyl)-sn-glycero-3-phosphoethanolamine(in) + H(+)(in). It carries out the reaction 1-acyl-sn-glycero-3-phospho-(1'-sn-glycerol)(out) + H(+)(out) = 1-acyl-sn-glycero-3-phospho-(1'-sn-glycerol)(in) + H(+)(in). The catalysed reaction is 1-(9Z-octadecenoyl)-sn-glycero-3-phospho-(1'-sn-glycerol)(out) + H(+)(out) = 1-(9Z-octadecenoyl)-sn-glycero-3-phospho-(1'-sn-glycerol)(in) + H(+)(in). The enzyme catalyses a 1-O-(1Z-alkenyl)-sn-glycero-3-phosphocholine(out) + H(+)(out) = a 1-O-(1Z-alkenyl)-sn-glycero-3-phosphocholine(in) + H(+)(in). It catalyses the reaction 1-(1Z-hexadecenyl)-sn-glycero-3-phosphocholine(out) + H(+)(out) = 1-(1Z-hexadecenyl)-sn-glycero-3-phosphocholine(in) + H(+)(in). It carries out the reaction a 1-O-(1Z-alkenyl)-sn-glycero-3-phosphoethanolamine(out) + H(+)(out) = a 1-O-(1Z-alkenyl)-sn-glycero-3-phosphoethanolamine(in) + H(+)(in). The catalysed reaction is 1-O-(1Z-hexadecenyl)-sn-glycero-3-phosphoethanolamine(out) + H(+)(out) = 1-O-(1Z-hexadecenyl)-sn-glycero-3-phosphoethanolamine(in) + H(+)(in). Plays a critical role in the phospholipid salvage pathway from lysosomes to the cytosol. Mediates the rate-limiting, proton-dependent, lysosomal efflux of lysophospholipids, which can then be reacylated by acyltransferases in the endoplasmic reticulum to form phospholipids. Selective for zwitterionic headgroups such as lysophosphatidylcholine (LPC) and lysophosphatidylethanolamine (LPE), can also transport lysophosphatidylglycerol (LPG), but not other anionic lysophospholipids, sphingosine, nor sphingomyelin. Transports lysophospholipids with saturated, monounsaturated, and polyunsaturated fatty acids, such as 1-hexadecanoyl-sn-glycero-3-phosphocholine, 1-(9Z-octadecenoyl)-sn-glycero-3-phosphocholine and 1-(4Z,7Z,10Z,13Z,16Z,19Z-docosahexaenoyl)-sn-glycero-3-phosphocholine, respectively. Can also transport lysoplasmalogen (LPC with a fatty alcohol) such as 1-(1Z-hexadecenyl)-sn-glycero-3-phosphocholine. Essential player in lysosomal homeostasis. Crucial for cell survival under conditions of nutrient limitation. May be involved in necrotic or autophagic cell death. The polypeptide is Protein spinster homolog 1 (Spns1) (Rattus norvegicus (Rat)).